The primary structure comprises 433 residues: tRNA-2-methylthio-N(6)-dimethylallyladenosine synthase (433 aa).

In terms of domain architecture, MTTase N-terminal spans 3-118 (KRLYIETLGC…IRDVIKQEKA (116 aa)). Cysteine 12, cysteine 49, cysteine 81, cysteine 150, cysteine 154, and cysteine 157 together coordinate [4Fe-4S] cluster. The Radical SAM core domain occupies 136-371 (RTSPYKAFIN…LHLQMLDSIS (236 aa)). The TRAM domain maps to 372–433 (EQEKDKVYEV…RLSLEGELVG (62 aa)).

The protein belongs to the methylthiotransferase family. MiaB subfamily. As to quaternary structure, monomer. The cofactor is [4Fe-4S] cluster.

It localises to the cytoplasm. It carries out the reaction N(6)-dimethylallyladenosine(37) in tRNA + (sulfur carrier)-SH + AH2 + 2 S-adenosyl-L-methionine = 2-methylsulfanyl-N(6)-dimethylallyladenosine(37) in tRNA + (sulfur carrier)-H + 5'-deoxyadenosine + L-methionine + A + S-adenosyl-L-homocysteine + 2 H(+). In terms of biological role, catalyzes the methylthiolation of N6-(dimethylallyl)adenosine (i(6)A), leading to the formation of 2-methylthio-N6-(dimethylallyl)adenosine (ms(2)i(6)A) at position 37 in tRNAs that read codons beginning with uridine. The polypeptide is tRNA-2-methylthio-N(6)-dimethylallyladenosine synthase (Nitratiruptor sp. (strain SB155-2)).